The primary structure comprises 791 residues: MGTVGKKKDRPTHGCSTIPKLALELKQIIHSTTHPKVPPVTPLRVMMPLGKLSKGASLDDLIQMCIQAFDLDGNMGQNSELLQIMLTMHGFLLPSTELLMKLRTLYQDALQNRSFSFCLRICYFIRYWVTELWVMFKMDAKLTQAMEEFQELVRSKGEELHWRLIDTAQINSRDWSRKLTQRIKPNCSKKRKVSLLFDHLEPQELAEHLTYLEFKAFRRISFSDYQNYIVSGCVKENPTMERSIALCNGISQWVQFMVLSRPTPQLRAEVLTKFIHVAQKLHQLQNFNTLMAVIGGLCHSSISRLKDTSAHVSHDVNKVLNEMTELLSSCRNYDNYRRVYNECTNFKIPILGVHLKDLIALHEAMPDFLEDSKINVPKLHSLYNHINELIQLQNIAPPLEANMDLVHLLTLSLDLYYTEDEMYELSYAREPRNHRAPPVTPSKPPVVADWASGVSPKPDPKTISKHVQRMVDSVFKNYDLDQDGYISQEEFEKIAASFPFSFCVMDKDREGLISRQEITAYFMRASSICSKLGLGFLHNFQETTYLRPTFCDNCAGFLWGVIKQGYRCKDCGMNCHKQCKELVVFECKKRSKLSVGENSSMFDSGQLEVIPAGGKGQTNDCLGAEEGPYSYPNGDGDIHTEVSKDRTIMLMGSSAQKISVRLQPAVKHRATQTENEPQSLCLQVPSPQRSRTPGLTSHLPISPMPSPCPSPVPTRKKAYAKWENKDSIRKARAELRGGKAGIQELEKEKALLKEENTTLKIQLKDAQRRVETLRAELRKYVLDSDVHQTGS.

The N-terminal Ras-GEF domain maps to 49–172 (LGKLSKGASL…RLIDTAQINS (124 aa)). Positions 53–106 (SKGASLDDLIQMCIQAFDLDGNMGQNSELLQIMLTMHGFLLPSTELLMKLRTLY) are ras exchanger motif region; required for transforming activity. In terms of domain architecture, Ras-GEF spans 201–432 (EPQELAEHLT…YELSYAREPR (232 aa)). EF-hand domains are found at residues 466-501 (HVQR…FPFS) and 502-528 (FCVM…ASSI). Residues aspartate 479, aspartate 481, aspartate 483, tyrosine 485, glutamate 490, aspartate 506, aspartate 508, glutamate 510, and glutamate 517 each contribute to the Ca(2+) site. The Phorbol-ester/DAG-type zinc-finger motif lies at 537 to 587 (LHNFQETTYLRPTFCDNCAGFLWGVIKQGYRCKDCGMNCHKQCKELVVFEC). The span at 683-695 (QVPSPQRSRTPGL) shows a compositional bias: polar residues. The interval 683 to 715 (QVPSPQRSRTPGLTSHLPISPMPSPCPSPVPTR) is disordered. Positions 702-712 (SPMPSPCPSPV) are enriched in pro residues. Residues 728–785 (IRKARAELRGGKAGIQELEKEKALLKEENTTLKIQLKDAQRRVETLRAELRKYVLDSD) are a coiled coil.

Belongs to the RASGRP family.

It is found in the cytoplasm. Its subcellular location is the cytosol. The protein resides in the cell membrane. It localises to the golgi apparatus membrane. The protein localises to the endoplasmic reticulum membrane. With respect to regulation, regulated by F-actin polymerization and probably by calcium. In terms of biological role, functions as a diacylglycerol (DAG)-regulated nucleotide exchange factor specifically activating Ras through the exchange of bound GDP for GTP. The sequence is that of RAS guanyl-releasing protein 1 (rasgrp1) from Xenopus tropicalis (Western clawed frog).